The chain runs to 450 residues: 23S rRNA (uracil(1939)-C(5))-methyltransferase RlmD (450 aa).

The TRAM domain occupies 12–70; that stretch reads SKQLSAKLSLSVNQLDHLGAGIAQHQGKVVFIPGALPDETVTVQLTEQKKNYARAKLIK. [4Fe-4S] cluster-binding residues include cysteine 83, cysteine 89, cysteine 92, and cysteine 171. S-adenosyl-L-methionine is bound by residues glutamine 283, phenylalanine 312, asparagine 317, glutamate 333, aspartate 360, and aspartate 380. The Nucleophile role is filled by cysteine 406.

This sequence belongs to the class I-like SAM-binding methyltransferase superfamily. RNA M5U methyltransferase family. RlmD subfamily.

It carries out the reaction uridine(1939) in 23S rRNA + S-adenosyl-L-methionine = 5-methyluridine(1939) in 23S rRNA + S-adenosyl-L-homocysteine + H(+). Catalyzes the formation of 5-methyl-uridine at position 1939 (m5U1939) in 23S rRNA. This Shewanella baltica (strain OS223) protein is 23S rRNA (uracil(1939)-C(5))-methyltransferase RlmD.